The chain runs to 401 residues: Probable N-acetyl-gamma-glutamyl-phosphate reductase, chloroplastic (401 aa).

A chloroplast-targeting transit peptide spans 1 to 48 (MSTASAFSSIQGCWFKGERKIRVADKRAKRLTLGSHVASPSSMSFRVS). The active site involves Cys-205.

Belongs to the NAGSA dehydrogenase family. Type 1 subfamily. In terms of assembly, homotetramer.

Its subcellular location is the plastid. It localises to the chloroplast. It catalyses the reaction N-acetyl-L-glutamate 5-semialdehyde + phosphate + NADP(+) = N-acetyl-L-glutamyl 5-phosphate + NADPH + H(+). The protein operates within amino-acid biosynthesis; L-arginine biosynthesis; N(2)-acetyl-L-ornithine from L-glutamate: step 3/4. The polypeptide is Probable N-acetyl-gamma-glutamyl-phosphate reductase, chloroplastic (Arabidopsis thaliana (Mouse-ear cress)).